We begin with the raw amino-acid sequence, 396 residues long: Subtilisin-like protease 5 (396 aa).

The signal sequence occupies residues 1–20; the sequence is MTGFLTILSLSLAALSVTNA. Residues 21 to 116 constitute a propeptide that is removed on maturation; the sequence is AQILSVPQGA…VEPDAIIKQH (96 aa). Residues 37–114 enclose the Inhibitor I9 domain; sequence YIVVMKDDTS…AFVEPDAIIK (78 aa). The Peptidase S8 domain occupies 125-396; sequence PWGLSRLSNR…SRLLYNGSGR (272 aa). Catalysis depends on charge relay system residues Asp156 and His187. N-linked (GlcNAc...) asparagine glycans are attached at residues Asn230 and Asn248. Ser342 (charge relay system) is an active-site residue. The segment at 376-396 is disordered; sequence PTIRNPGPDTTSRLLYNGSGR. A glycan (N-linked (GlcNAc...) asparagine) is linked at Asn392.

This sequence belongs to the peptidase S8 family.

Its subcellular location is the secreted. Secreted subtilisin-like serine protease with keratinolytic activity that contributes to pathogenicity. This is Subtilisin-like protease 5 (SUB5) from Arthroderma gypseum (strain ATCC MYA-4604 / CBS 118893) (Microsporum gypseum).